The primary structure comprises 224 residues: Octanoyltransferase (224 aa).

Residues 29–224 (EATPDALWIC…GQKLATYLAP (196 aa)) form the BPL/LPL catalytic domain. Substrate contacts are provided by residues 68–75 (RGGQVTFH), 157–159 (ALG), and 170–172 (GVA). Residue Cys-188 is the Acyl-thioester intermediate of the active site.

The protein belongs to the LipB family.

It is found in the cytoplasm. The catalysed reaction is octanoyl-[ACP] + L-lysyl-[protein] = N(6)-octanoyl-L-lysyl-[protein] + holo-[ACP] + H(+). It participates in protein modification; protein lipoylation via endogenous pathway; protein N(6)-(lipoyl)lysine from octanoyl-[acyl-carrier-protein]: step 1/2. Functionally, catalyzes the transfer of endogenously produced octanoic acid from octanoyl-acyl-carrier-protein onto the lipoyl domains of lipoate-dependent enzymes. Lipoyl-ACP can also act as a substrate although octanoyl-ACP is likely to be the physiological substrate. The polypeptide is Octanoyltransferase (Polaromonas naphthalenivorans (strain CJ2)).